Here is a 231-residue protein sequence, read N- to C-terminus: 5'-methylthioadenosine/S-adenosylhomocysteine nucleosidase (231 aa).

The Proton acceptor role is filled by E12. Residues G78, M153, and 174–175 contribute to the substrate site; that span reads ME. The active-site Proton donor is D198.

It belongs to the PNP/UDP phosphorylase family. MtnN subfamily.

It carries out the reaction S-adenosyl-L-homocysteine + H2O = S-(5-deoxy-D-ribos-5-yl)-L-homocysteine + adenine. The enzyme catalyses S-methyl-5'-thioadenosine + H2O = 5-(methylsulfanyl)-D-ribose + adenine. It catalyses the reaction 5'-deoxyadenosine + H2O = 5-deoxy-D-ribose + adenine. It participates in amino-acid biosynthesis; L-methionine biosynthesis via salvage pathway; S-methyl-5-thio-alpha-D-ribose 1-phosphate from S-methyl-5'-thioadenosine (hydrolase route): step 1/2. In terms of biological role, catalyzes the irreversible cleavage of the glycosidic bond in both 5'-methylthioadenosine (MTA) and S-adenosylhomocysteine (SAH/AdoHcy) to adenine and the corresponding thioribose, 5'-methylthioribose and S-ribosylhomocysteine, respectively. Also cleaves 5'-deoxyadenosine, a toxic by-product of radical S-adenosylmethionine (SAM) enzymes, into 5-deoxyribose and adenine. This chain is 5'-methylthioadenosine/S-adenosylhomocysteine nucleosidase, found in Bacillus cereus (strain G9842).